We begin with the raw amino-acid sequence, 166 residues long: uncharacterized protein (166 aa).

Alanine 2 carries the N-acetylalanine modification.

Homodimer.

This is an uncharacterized protein from Arabidopsis thaliana (Mouse-ear cress).